The chain runs to 61 residues: Photosystem II reaction center protein K (61 aa).

A propeptide spanning residues 1 to 24 is cleaved from the precursor; it reads MLNIFSLICICLNSALYSSSLFFA. The chain crosses the membrane as a helical span at residues 40–60; that stretch reads MPVIPLFFFLLAFVWQAAVSF.

This sequence belongs to the PsbK family. PSII is composed of 1 copy each of membrane proteins PsbA, PsbB, PsbC, PsbD, PsbE, PsbF, PsbH, PsbI, PsbJ, PsbK, PsbL, PsbM, PsbT, PsbX, PsbY, PsbZ, Psb30/Ycf12, at least 3 peripheral proteins of the oxygen-evolving complex and a large number of cofactors. It forms dimeric complexes.

The protein resides in the plastid. It is found in the chloroplast thylakoid membrane. Functionally, one of the components of the core complex of photosystem II (PSII). PSII is a light-driven water:plastoquinone oxidoreductase that uses light energy to abstract electrons from H(2)O, generating O(2) and a proton gradient subsequently used for ATP formation. It consists of a core antenna complex that captures photons, and an electron transfer chain that converts photonic excitation into a charge separation. This chain is Photosystem II reaction center protein K, found in Panax ginseng (Korean ginseng).